The following is a 346-amino-acid chain: Heat-inducible transcription repressor HrcA (346 aa).

It belongs to the HrcA family.

Its function is as follows. Negative regulator of class I heat shock genes (grpE-dnaK-dnaJ and groELS operons). Prevents heat-shock induction of these operons. The protein is Heat-inducible transcription repressor HrcA of Pediococcus pentosaceus (strain ATCC 25745 / CCUG 21536 / LMG 10740 / 183-1w).